A 269-amino-acid polypeptide reads, in one-letter code: Ribosomal RNA small subunit methyltransferase J (269 aa).

Residues Glu-124–Arg-125 and Asp-188 contribute to the S-adenosyl-L-methionine site.

The protein belongs to the methyltransferase superfamily. RsmJ family.

Its subcellular location is the cytoplasm. The enzyme catalyses guanosine(1516) in 16S rRNA + S-adenosyl-L-methionine = N(2)-methylguanosine(1516) in 16S rRNA + S-adenosyl-L-homocysteine + H(+). In terms of biological role, specifically methylates the guanosine in position 1516 of 16S rRNA. The polypeptide is Ribosomal RNA small subunit methyltransferase J (Saccharophagus degradans (strain 2-40 / ATCC 43961 / DSM 17024)).